The following is a 96-amino-acid chain: Aspartyl/glutamyl-tRNA(Asn/Gln) amidotransferase subunit C (96 aa).

It belongs to the GatC family. Heterotrimer of A, B and C subunits.

The enzyme catalyses L-glutamyl-tRNA(Gln) + L-glutamine + ATP + H2O = L-glutaminyl-tRNA(Gln) + L-glutamate + ADP + phosphate + H(+). The catalysed reaction is L-aspartyl-tRNA(Asn) + L-glutamine + ATP + H2O = L-asparaginyl-tRNA(Asn) + L-glutamate + ADP + phosphate + 2 H(+). In terms of biological role, allows the formation of correctly charged Asn-tRNA(Asn) or Gln-tRNA(Gln) through the transamidation of misacylated Asp-tRNA(Asn) or Glu-tRNA(Gln) in organisms which lack either or both of asparaginyl-tRNA or glutaminyl-tRNA synthetases. The reaction takes place in the presence of glutamine and ATP through an activated phospho-Asp-tRNA(Asn) or phospho-Glu-tRNA(Gln). This is Aspartyl/glutamyl-tRNA(Asn/Gln) amidotransferase subunit C from Bacillus anthracis (strain A0248).